A 277-amino-acid chain; its full sequence is Sulfur carrier protein FdhD (277 aa).

Catalysis depends on Cys-123, which acts as the Cysteine persulfide intermediate.

It belongs to the FdhD family.

It localises to the cytoplasm. Required for formate dehydrogenase (FDH) activity. Acts as a sulfur carrier protein that transfers sulfur from IscS to the molybdenum cofactor prior to its insertion into FDH. The chain is Sulfur carrier protein FdhD from Pectobacterium atrosepticum (strain SCRI 1043 / ATCC BAA-672) (Erwinia carotovora subsp. atroseptica).